Here is a 555-residue protein sequence, read N- to C-terminus: Potassium-transporting ATPase potassium-binding subunit (555 aa).

10 helical membrane-spanning segments follow: residues 2–22 (IWVA…PTGI), 60–80 (QYAL…YFIF), 130–150 (IGIT…VMAF), 173–193 (VFLP…VPQT), 246–266 (MSNI…PFTY), 278–298 (ILFV…TTSE), 374–394 (AGFV…GLMV), 412–432 (LIAV…ALAL), 483–503 (LVMF…AASL), and 525–545 (GIFI…MLVL).

It belongs to the KdpA family. The system is composed of three essential subunits: KdpA, KdpB and KdpC.

It localises to the cell membrane. Functionally, part of the high-affinity ATP-driven potassium transport (or Kdp) system, which catalyzes the hydrolysis of ATP coupled with the electrogenic transport of potassium into the cytoplasm. This subunit binds the extracellular potassium ions and delivers the ions to the membrane domain of KdpB through an intramembrane tunnel. This is Potassium-transporting ATPase potassium-binding subunit from Bacillus thuringiensis (strain Al Hakam).